The chain runs to 356 residues: Protein-glutamate methylesterase/protein-glutamine glutaminase 2 (356 aa).

The 118-residue stretch at 6 to 123 (KVLIVDDSAL…KQFLEESSIR (118 aa)) folds into the Response regulatory domain. Asp57 is modified (4-aspartylphosphate). The CheB-type methylesterase domain occupies 165–356 (VQRTEKVVVV…AAAIVKACNS (192 aa)). Catalysis depends on residues Ser177, His203, and Asp299.

It belongs to the CheB family. Phosphorylated by CheA. Phosphorylation of the N-terminal regulatory domain activates the methylesterase activity.

Its subcellular location is the cytoplasm. The enzyme catalyses [protein]-L-glutamate 5-O-methyl ester + H2O = L-glutamyl-[protein] + methanol + H(+). It carries out the reaction L-glutaminyl-[protein] + H2O = L-glutamyl-[protein] + NH4(+). Involved in chemotaxis. Part of a chemotaxis signal transduction system that modulates chemotaxis in response to various stimuli. Catalyzes the demethylation of specific methylglutamate residues introduced into the chemoreceptors (methyl-accepting chemotaxis proteins or MCP) by CheR. Also mediates the irreversible deamidation of specific glutamine residues to glutamic acid. This chain is Protein-glutamate methylesterase/protein-glutamine glutaminase 2, found in Oleidesulfovibrio alaskensis (strain ATCC BAA-1058 / DSM 17464 / G20) (Desulfovibrio alaskensis).